The following is a 328-amino-acid chain: Ribosomal RNA small subunit methyltransferase H (328 aa).

Residues 37–39 (GGH), Asp-57, Phe-83, Asp-104, and Gln-111 contribute to the S-adenosyl-L-methionine site.

This sequence belongs to the methyltransferase superfamily. RsmH family.

It is found in the cytoplasm. The catalysed reaction is cytidine(1402) in 16S rRNA + S-adenosyl-L-methionine = N(4)-methylcytidine(1402) in 16S rRNA + S-adenosyl-L-homocysteine + H(+). In terms of biological role, specifically methylates the N4 position of cytidine in position 1402 (C1402) of 16S rRNA. The chain is Ribosomal RNA small subunit methyltransferase H from Neisseria meningitidis serogroup B (strain ATCC BAA-335 / MC58).